Consider the following 185-residue polypeptide: ADP-ribose 1''-phosphate phosphatase (185 aa).

In terms of domain architecture, Macro spans 1-185 (MSPARLRITD…VVEVVAWERA (185 aa)). Substrate is bound by residues 13–15 (GDL), 27–29 (ACN), 34–39 (WGGGIA), and 142–148 (INAGLFA).

It belongs to the POA1 family.

It carries out the reaction ADP-alpha-D-ribose 1''-phosphate + H2O = ADP-D-ribose + phosphate. Functionally, highly specific phosphatase involved in the metabolism of ADP-ribose 1''-phosphate (Appr1p) which is produced as a consequence of tRNA splicing. This is ADP-ribose 1''-phosphate phosphatase (POA1) from Chaetomium globosum (strain ATCC 6205 / CBS 148.51 / DSM 1962 / NBRC 6347 / NRRL 1970) (Soil fungus).